A 98-amino-acid chain; its full sequence is Small ribosomal subunit protein uS19 (98 aa).

The segment at 77-98 is disordered; that stretch reads TRTYRGHAGGKSEKGGSAPRKK.

Belongs to the universal ribosomal protein uS19 family.

Its function is as follows. Protein S19 forms a complex with S13 that binds strongly to the 16S ribosomal RNA. In Chlorobium phaeobacteroides (strain BS1), this protein is Small ribosomal subunit protein uS19.